Consider the following 409-residue polypeptide: Pyrophosphate--fructose 6-phosphate 1-phosphotransferase (409 aa).

Diphosphate is bound at residue Gly-14. Asp-123 contributes to the Mg(2+) binding site. Substrate-binding positions include 151–153 (TID), 196–198 (MGR), Glu-268, and 325–328 (YFAR). Catalysis depends on Asp-153, which acts as the Proton acceptor.

The protein belongs to the phosphofructokinase type A (PFKA) family. PPi-dependent PFK group II subfamily. Clade 'P' sub-subfamily. Homotetramer. Requires Mg(2+) as cofactor.

It localises to the cytoplasm. The catalysed reaction is beta-D-fructose 6-phosphate + diphosphate = beta-D-fructose 1,6-bisphosphate + phosphate + H(+). It functions in the pathway carbohydrate degradation; glycolysis; D-glyceraldehyde 3-phosphate and glycerone phosphate from D-glucose: step 3/4. Non-allosteric. Its function is as follows. Catalyzes the phosphorylation of D-fructose 6-phosphate, the first committing step of glycolysis. Uses inorganic phosphate (PPi) as phosphoryl donor instead of ATP like common ATP-dependent phosphofructokinases (ATP-PFKs), which renders the reaction reversible, and can thus function both in glycolysis and gluconeogenesis. Consistently, PPi-PFK can replace the enzymes of both the forward (ATP-PFK) and reverse (fructose-bisphosphatase (FBPase)) reactions. The polypeptide is Pyrophosphate--fructose 6-phosphate 1-phosphotransferase (Methylotuvimicrobium alcaliphilum (strain DSM 19304 / NCIMB 14124 / VKM B-2133 / 20Z) (Methylomicrobium alcaliphilum)).